The primary structure comprises 463 residues: MGNLLRHLPQLDALLSTAAMASLLERYSREEVADALRAALQEVRKGVQAGHMDSLPDFESAGFVSGVMAGIEARRRPNLVAAINATGIIIHTNLGRARLAPEAMAAVQAAGAHASNLELDLATGRRGSRYAHVEALICELTGAEAALVVNNCAAAVLLSLMATAQGRKVIASRGELIEIGGSFRLPDVIQQSGATLKEVGATNKTRASDYAQAIDAETAVLLKSHTSNYQIVGFTHAPQREELASLARETGTILMEDLGSGVLVDLSPYGLNDEPVVSDVLKSGVDVVMFSGDKLLGGPQCGIIAGRADIIVSLKKHPLCRAVRIDKLSLAALEATLRLYRAPHDPFQKVPVLRAISQPVEEIEARARRLAGELTVAGIVDVMCIPSRAYVGGGSLPQQNLESCAVTVIVPHLSPDALAAALRAARPPVIGMIREDRFVMDVRTLIDGDLPGIVEAFRQVALR.

Lys294 is subject to N6-(pyridoxal phosphate)lysine.

It belongs to the SelA family. Pyridoxal 5'-phosphate is required as a cofactor.

It localises to the cytoplasm. The enzyme catalyses L-seryl-tRNA(Sec) + selenophosphate + H(+) = L-selenocysteinyl-tRNA(Sec) + phosphate. The protein operates within aminoacyl-tRNA biosynthesis; selenocysteinyl-tRNA(Sec) biosynthesis; selenocysteinyl-tRNA(Sec) from L-seryl-tRNA(Sec) (bacterial route): step 1/1. In terms of biological role, converts seryl-tRNA(Sec) to selenocysteinyl-tRNA(Sec) required for selenoprotein biosynthesis. The sequence is that of L-seryl-tRNA(Sec) selenium transferase from Hyphomonas neptunium (strain ATCC 15444).